Reading from the N-terminus, the 248-residue chain is Ribosomal RNA small subunit methyltransferase J (248 aa).

S-adenosyl-L-methionine contacts are provided by residues 101 to 102 (RD), 117 to 118 (ER), 153 to 154 (SS), and D171.

Belongs to the methyltransferase superfamily. RsmJ family.

Its subcellular location is the cytoplasm. It carries out the reaction guanosine(1516) in 16S rRNA + S-adenosyl-L-methionine = N(2)-methylguanosine(1516) in 16S rRNA + S-adenosyl-L-homocysteine + H(+). Specifically methylates the guanosine in position 1516 of 16S rRNA. This is Ribosomal RNA small subunit methyltransferase J from Pectobacterium atrosepticum (strain SCRI 1043 / ATCC BAA-672) (Erwinia carotovora subsp. atroseptica).